The primary structure comprises 460 residues: Ammonium transporter 1 member 3 (460 aa).

The next 10 helical transmembrane spans lie at alanine 15 to alanine 37, leucine 50 to phenylalanine 72, phenylalanine 98 to isoleucine 117, threonine 124 to tryptophan 146, isoleucine 166 to valine 188, asparagine 209 to phenylalanine 227, alanine 255 to valine 277, proline 305 to leucine 327, alanine 337 to alanine 356, and glycine 377 to valine 399.

It belongs to the ammonia transporter channel (TC 1.A.11.2) family. In terms of tissue distribution, leaves.

Its subcellular location is the membrane. Its function is as follows. Ammonium transporter that may be involved in ammonium transport throughout the plant. This Solanum lycopersicum (Tomato) protein is Ammonium transporter 1 member 3 (AMT1-3).